A 481-amino-acid polypeptide reads, in one-letter code: Serine/threonine-protein kinase US3 (481 aa).

A disordered region spans residues 12 to 63 (GQGRRKEEAVPPETKPSRVFPHGPFYTPAEDACLDSPPPETPKPSHTTPPSE). In terms of domain architecture, Protein kinase spans 191 to 478 (FTIHGALTPG…AAELLCLPLF (288 aa)). ATP is bound by residues 197–205 (LTPGSEGCV) and lysine 220. The active-site Proton acceptor is aspartate 305.

Belongs to the protein kinase superfamily. Ser/Thr protein kinase family. In terms of assembly, interacts with host LAT; this interaction prevents LAT activation of TRAF6. In terms of processing, phosphorylated by UL13; this phosphorylation regulates subsequent phosphorylation of UL31 and UL34 by US3. Autophosphorylated.

It localises to the host cytoplasm. The protein resides in the host nucleus. The enzyme catalyses L-seryl-[protein] + ATP = O-phospho-L-seryl-[protein] + ADP + H(+). It carries out the reaction L-threonyl-[protein] + ATP = O-phospho-L-threonyl-[protein] + ADP + H(+). Multifunctional serine/threonine kinase that plays a role in several processes including egress of virus particles from the nucleus, modulation of the actin cytoskeleton and inhibition of host immune response. Phosphorylates UL31 and UL34, two critical regulators of capsid budding from nucleus to endoplasmic reticulum, thereby facilitating virion egress. Modulates and redistributes host components of the nuclear envelope, including LMNA, emerin/EMD and the nuclear matrix protein MATR3. In turn, facilitates nuclear pore impairment and capsid release through impaired nuclear envelope. Phosphorylates envelope glycoprotein B (gB), probably to direct it to the cell surface. Promotes virus intracellular spread by restructuring host cell cytoskeleton. Blocks host apoptosis to extend cell survival and allow efficient viral replication. Promotes viral gene expression by phosphorylating host HDAC2 to reduce viral genome silencing. Strongly inhibits TCR-activated signal transduction in T-cells by reducing the ubiquitination of LAT and TRAF6, leading to a suboptimal activation of LAT. Subverts host antiviral innate immunity by inhibiting type I interferon production through hyperphosphorylation of beta-catenin/CTNNB1. In addition, phosphorylates the RNA sensor RIGI and the transcription factor IRF3 to prevent the RLR-mediated antiviral signaling pathway. Hyperphosphorylates host RELA and thereby dampens NF-kappa-B signaling. Acts as an immunoevasin partly responsible for inhibition of MR1 expression and antigen presentation in response to bacterial infection. The protein is Serine/threonine-protein kinase US3 (US3) of Human herpesvirus 1 (strain 17) (HHV-1).